The primary structure comprises 155 residues: uncharacterized protein (155 aa).

Positions 56 to 79 (GEKRPTHRRPYRRTKPYPKRPSML) are disordered. Basic residues predominate over residues 60–73 (PTHRRPYRRTKPYP).

This is an uncharacterized protein from Sinorhizobium fredii (strain NBRC 101917 / NGR234).